The primary structure comprises 311 residues: Glutamyl-Q tRNA(Asp) synthetase (311 aa).

L-glutamate is bound by residues 14–18 (RYAPS) and E50. Positions 17–27 (PSPSGDLHLGN) match the 'HIGH' region motif. Zn(2+) is bound by residues C104, C106, Y125, and C129. L-glutamate-binding residues include Y186 and R204. Residues 242–246 (RLAKR) carry the 'KMSKS' region motif. Residue K245 participates in ATP binding.

It belongs to the class-I aminoacyl-tRNA synthetase family. GluQ subfamily. Requires Zn(2+) as cofactor.

Its function is as follows. Catalyzes the tRNA-independent activation of glutamate in presence of ATP and the subsequent transfer of glutamate onto a tRNA(Asp). Glutamate is transferred on the 2-amino-5-(4,5-dihydroxy-2-cyclopenten-1-yl) moiety of the queuosine in the wobble position of the QUC anticodon. This Nocardia farcinica (strain IFM 10152) protein is Glutamyl-Q tRNA(Asp) synthetase.